Here is a 122-residue protein sequence, read N- to C-terminus: UPF0102 protein XAC0764 (122 aa).

The protein belongs to the UPF0102 family.

This chain is UPF0102 protein XAC0764, found in Xanthomonas axonopodis pv. citri (strain 306).